Here is a 255-residue protein sequence, read N- to C-terminus: Hydroxyacylglutathione hydrolase (255 aa).

Positions 53, 55, 57, 58, 110, 127, and 165 each coordinate Zn(2+).

Belongs to the metallo-beta-lactamase superfamily. Glyoxalase II family. As to quaternary structure, monomer. It depends on Zn(2+) as a cofactor.

It catalyses the reaction an S-(2-hydroxyacyl)glutathione + H2O = a 2-hydroxy carboxylate + glutathione + H(+). It participates in secondary metabolite metabolism; methylglyoxal degradation; (R)-lactate from methylglyoxal: step 2/2. Functionally, thiolesterase that catalyzes the hydrolysis of S-D-lactoyl-glutathione to form glutathione and D-lactic acid. The chain is Hydroxyacylglutathione hydrolase from Xanthomonas axonopodis pv. citri (strain 306).